We begin with the raw amino-acid sequence, 150 residues long: Transcriptional repressor NrdR (150 aa).

A zinc finger spans residues 3–34 (CPFCNASDTKVVDTRASEDDKIVRRRRECISC). Residues 49 to 139 (LTVVKKDKNR…VYREFTDVKS (91 aa)) form the ATP-cone domain.

The protein belongs to the NrdR family. Zn(2+) is required as a cofactor.

Functionally, negatively regulates transcription of bacterial ribonucleotide reductase nrd genes and operons by binding to NrdR-boxes. The chain is Transcriptional repressor NrdR from Finegoldia magna (strain ATCC 29328 / DSM 20472 / WAL 2508) (Peptostreptococcus magnus).